Here is a 264-residue protein sequence, read N- to C-terminus: Thymidylate synthase (264 aa).

A dUMP-binding site is contributed by R21. H51 lines the (6R)-5,10-methylene-5,6,7,8-tetrahydrofolate pocket. Position 126 to 127 (126 to 127 (RR)) interacts with dUMP. Residue C146 is the Nucleophile of the active site. DUMP contacts are provided by residues 166–169 (RSCD), N177, and 207–209 (HLY). D169 contacts (6R)-5,10-methylene-5,6,7,8-tetrahydrofolate. A263 provides a ligand contact to (6R)-5,10-methylene-5,6,7,8-tetrahydrofolate.

This sequence belongs to the thymidylate synthase family. Bacterial-type ThyA subfamily. As to quaternary structure, homodimer.

The protein localises to the cytoplasm. The enzyme catalyses dUMP + (6R)-5,10-methylene-5,6,7,8-tetrahydrofolate = 7,8-dihydrofolate + dTMP. Its pathway is pyrimidine metabolism; dTTP biosynthesis. Its function is as follows. Catalyzes the reductive methylation of 2'-deoxyuridine-5'-monophosphate (dUMP) to 2'-deoxythymidine-5'-monophosphate (dTMP) while utilizing 5,10-methylenetetrahydrofolate (mTHF) as the methyl donor and reductant in the reaction, yielding dihydrofolate (DHF) as a by-product. This enzymatic reaction provides an intracellular de novo source of dTMP, an essential precursor for DNA biosynthesis. The polypeptide is Thymidylate synthase (Shewanella sp. (strain MR-4)).